The chain runs to 195 residues: MEAFTIHTGRAVPLRRSDVDTDQIIPSEWLKRIERTGFGAGLFSEWRADPSFVLNDPAHAGASILLAGPDFGTGSSREHAVWALQDYGFRAVLSPRFADIFRGNALGNGLLPVVLPADTVEALTAAVEADPTTEITVDLVAREVRGAGQVAGFELDDFTRWRLMEGLDDVGLTLRHEQDITVFEASRPGWLPTTA.

It belongs to the LeuD family. LeuD type 1 subfamily. In terms of assembly, heterodimer of LeuC and LeuD.

It carries out the reaction (2R,3S)-3-isopropylmalate = (2S)-2-isopropylmalate. Its pathway is amino-acid biosynthesis; L-leucine biosynthesis; L-leucine from 3-methyl-2-oxobutanoate: step 2/4. Catalyzes the isomerization between 2-isopropylmalate and 3-isopropylmalate, via the formation of 2-isopropylmaleate. This is 3-isopropylmalate dehydratase small subunit from Parafrankia sp. (strain EAN1pec).